The chain runs to 915 residues: Protein translocase subunit SecA (915 aa).

ATP contacts are provided by residues glutamine 87, 105-109 (GEGKT), and aspartate 516. The disordered stretch occupies residues 854–915 (QKMQMRHEQL…KYKNCHGQLE (62 aa)). Positions 899, 901, 910, and 911 each coordinate Zn(2+).

Belongs to the SecA family. As to quaternary structure, monomer and homodimer. Part of the essential Sec protein translocation apparatus which comprises SecA, SecYEG and auxiliary proteins SecDF-YajC and YidC. Zn(2+) serves as cofactor.

It localises to the cell inner membrane. The protein resides in the cytoplasm. It catalyses the reaction ATP + H2O + cellular proteinSide 1 = ADP + phosphate + cellular proteinSide 2.. Its function is as follows. Part of the Sec protein translocase complex. Interacts with the SecYEG preprotein conducting channel. Has a central role in coupling the hydrolysis of ATP to the transfer of proteins into and across the cell membrane, serving both as a receptor for the preprotein-SecB complex and as an ATP-driven molecular motor driving the stepwise translocation of polypeptide chains across the membrane. In Cellvibrio japonicus (strain Ueda107) (Pseudomonas fluorescens subsp. cellulosa), this protein is Protein translocase subunit SecA.